The following is a 418-amino-acid chain: Tyrosine--tRNA ligase (418 aa).

Residue Tyr34 coordinates L-tyrosine. The short motif at 39–48 (PTADSLHLGH) is the 'HIGH' region element. Positions 169 and 173 each coordinate L-tyrosine. The 'KMSKS' region motif lies at 229-233 (KFGKS). Lys232 serves as a coordination point for ATP. The 67-residue stretch at 352-418 (HNIVELLVTA…GKKKYFVLTY (67 aa)) folds into the S4 RNA-binding domain.

It belongs to the class-I aminoacyl-tRNA synthetase family. TyrS type 1 subfamily. Homodimer.

The protein localises to the cytoplasm. The catalysed reaction is tRNA(Tyr) + L-tyrosine + ATP = L-tyrosyl-tRNA(Tyr) + AMP + diphosphate + H(+). Catalyzes the attachment of tyrosine to tRNA(Tyr) in a two-step reaction: tyrosine is first activated by ATP to form Tyr-AMP and then transferred to the acceptor end of tRNA(Tyr). This chain is Tyrosine--tRNA ligase, found in Streptococcus mutans serotype c (strain ATCC 700610 / UA159).